Here is a 313-residue protein sequence, read N- to C-terminus: Small ribosomal subunit biogenesis GTPase RsgA (313 aa).

In terms of domain architecture, CP-type G spans 82–235 (REKLIAANAT…IIDSPGIQQF (154 aa)). GTP contacts are provided by residues 127–130 (NKTD) and 177–185 (GQSGMGKST). Zn(2+)-binding residues include Cys-259, Cys-264, His-266, and Cys-272.

This sequence belongs to the TRAFAC class YlqF/YawG GTPase family. RsgA subfamily. Monomer. Associates with 30S ribosomal subunit, binds 16S rRNA. Zn(2+) is required as a cofactor.

It is found in the cytoplasm. Its function is as follows. One of several proteins that assist in the late maturation steps of the functional core of the 30S ribosomal subunit. Helps release RbfA from mature subunits. May play a role in the assembly of ribosomal proteins into the subunit. Circularly permuted GTPase that catalyzes slow GTP hydrolysis, GTPase activity is stimulated by the 30S ribosomal subunit. The sequence is that of Small ribosomal subunit biogenesis GTPase RsgA from Nitrosospira multiformis (strain ATCC 25196 / NCIMB 11849 / C 71).